Consider the following 185-residue polypeptide: MVKDVISNMNVHMGKSIESLRKEYQKVRTGRATTSLLDDIKIDSYGTLSPLNQVATLAIPEARTITISPWDSKMIAPIEKAIMNSNLGLNPANDGKMIRLVLPPLTEERRKDIVKQLKRDAEEAKVALRNIRRDAIDQLKKLEKDKSISEDELKRAEKDVQDSTNSHVAKVDEVLLHKEKEVMEV.

Belongs to the RRF family.

It is found in the cytoplasm. In terms of biological role, responsible for the release of ribosomes from messenger RNA at the termination of protein biosynthesis. May increase the efficiency of translation by recycling ribosomes from one round of translation to another. This chain is Ribosome-recycling factor, found in Geobacter sp. (strain M21).